The following is a 334-amino-acid chain: S-adenosylmethionine:tRNA ribosyltransferase-isomerase (334 aa).

The protein belongs to the QueA family. Monomer.

It is found in the cytoplasm. It carries out the reaction 7-aminomethyl-7-carbaguanosine(34) in tRNA + S-adenosyl-L-methionine = epoxyqueuosine(34) in tRNA + adenine + L-methionine + 2 H(+). Its pathway is tRNA modification; tRNA-queuosine biosynthesis. Functionally, transfers and isomerizes the ribose moiety from AdoMet to the 7-aminomethyl group of 7-deazaguanine (preQ1-tRNA) to give epoxyqueuosine (oQ-tRNA). This is S-adenosylmethionine:tRNA ribosyltransferase-isomerase from Rubrobacter xylanophilus (strain DSM 9941 / JCM 11954 / NBRC 16129 / PRD-1).